The following is a 193-amino-acid chain: Ion-translocating oxidoreductase complex subunit A (193 aa).

A run of 6 helical transmembrane segments spans residues 5-25 (FLLFVGTVLVNNFVLVKFLGL), 39-59 (IGMGFATTFVMTLASVCSWLV), 62-82 (FILLPLDLIYLRTLSFILVIA), 102-122 (LLGIFLPLITTNCAVLGVALL), 134-154 (AIYGFGAAAGFSLVMVLFAAI), and 171-191 (SIGLITAGLMSLAFMGFSGLV).

Belongs to the NqrDE/RnfAE family. In terms of assembly, the complex is composed of six subunits: RnfA, RnfB, RnfC, RnfD, RnfE and RnfG.

Its subcellular location is the cell inner membrane. In terms of biological role, part of a membrane-bound complex that couples electron transfer with translocation of ions across the membrane. This is Ion-translocating oxidoreductase complex subunit A from Photorhabdus laumondii subsp. laumondii (strain DSM 15139 / CIP 105565 / TT01) (Photorhabdus luminescens subsp. laumondii).